The chain runs to 554 residues: Phenylalanine--tRNA ligase beta subunit (554 aa).

Residues 276 to 351 (LTPKSRIISV…INYGYEKFDG (76 aa)) enclose the B5 domain. Mg(2+) is bound by residues Asp329, Asp335, Glu338, and Glu339.

It belongs to the phenylalanyl-tRNA synthetase beta subunit family. Type 2 subfamily. In terms of assembly, tetramer of two alpha and two beta subunits. Mg(2+) serves as cofactor.

Its subcellular location is the cytoplasm. It carries out the reaction tRNA(Phe) + L-phenylalanine + ATP = L-phenylalanyl-tRNA(Phe) + AMP + diphosphate + H(+). This chain is Phenylalanine--tRNA ligase beta subunit, found in Methanococcus maripaludis (strain DSM 14266 / JCM 13030 / NBRC 101832 / S2 / LL).